An 809-amino-acid polypeptide reads, in one-letter code: Spindle pole body component alp14 (809 aa).

HEAT repeat units lie at residues Asp127 to Ala164 and Ile167 to Asp204. 3 disordered regions span residues Pro233–Gln274, Ala507–Leu608, and Glu619–His638. The segment covering Phe239–Thr253 has biased composition (polar residues). The span at Glu262–Gln274 shows a compositional bias: acidic residues. Residues Ala509–Pro518 are compositionally biased toward basic residues. Low complexity-rich tracts occupy residues Val526–Lys551 and Ser582–Gln595. Ser543 and Ser548 each carry phosphoserine. Over residues Val597–Leu608 the composition is skewed to polar residues. Residues Glu637–Ser697 are a coiled coil. Ser697 and Ser720 each carry phosphoserine.

The protein belongs to the TOG/XMAP215 family. In terms of assembly, interacts with alp14.

The protein localises to the cytoplasm. Its subcellular location is the cytoskeleton. It localises to the microtubule organizing center. The protein resides in the spindle pole body. It is found in the chromosome. The protein localises to the centromere. Its subcellular location is the kinetochore. Required for bipolar spindle formation and proper chromosome segregation. Has a role in connecting the kinetochores and the plus end of pole to chromosome microtubules. Also required for the activation of the spindle checkpoint pathway. The protein is Spindle pole body component alp14 (alp14) of Schizosaccharomyces pombe (strain 972 / ATCC 24843) (Fission yeast).